Consider the following 325-residue polypeptide: Aerobic respiration control sensor protein ArcB homolog (325 aa).

At 1–26 (MKNFKYFAQSYVDWVIRLGRLRFSLL) the chain is on the cytoplasmic side. The helical transmembrane segment at 27–47 (GVMILAVLALCTQILFSLFIV) threads the bilayer. Residues 48 to 57 (HQISWVDIFR) are Periplasmic-facing. A helical membrane pass occupies residues 58–78 (SVTFGLLTAPFVIYFFTLLVE). Topologically, residues 79 to 325 (KLEHSRLDLS…AQLMGRGFNS (247 aa)) are cytoplasmic. Residues 128-325 (TISHEFRTPL…AQLMGRGFNS (198 aa)) form the Histidine kinase domain. At H131 the chain carries Phosphohistidine; by autocatalysis.

The protein localises to the cell inner membrane. It carries out the reaction ATP + protein L-histidine = ADP + protein N-phospho-L-histidine.. Functionally, member of the two-component regulatory system ArcB/ArcA. Activates ArcA by phosphorylation. This is Aerobic respiration control sensor protein ArcB homolog (arcB) from Haemophilus influenzae (strain ATCC 51907 / DSM 11121 / KW20 / Rd).